The primary structure comprises 78 residues: Small integral membrane protein 1 (78 aa).

The residue at position 1 (Met1) is an N-acetylmethionine. The segment covering 1-18 (MQPQESHVHYSRWEDGSR) has biased composition (basic and acidic residues). The disordered stretch occupies residues 1–20 (MQPQESHVHYSRWEDGSRDG). Over 1–46 (MQPQESHVHYSRWEDGSRDGVSLGAVSSTEEASRCRRISQRLCTGK) the chain is Cytoplasmic. Residues Ser6, Ser17, Ser22, and Ser27 each carry the phosphoserine modification. Residues 47–67 (LGIAMKVLGGVALFWIIFILG) form a helical; Signal-anchor for type II membrane protein membrane-spanning segment. Topologically, residues 68 to 78 (YLTGYYVHKCK) are extracellular. Residues 68–78 (YLTGYYVHKCK) form a displays the Vel antigen region.

This sequence belongs to the SMIM1 family. In terms of assembly, homooligomer; disulfide-linked. In terms of tissue distribution, highly expressed in the bone marrow and expressed at lower levels in non-hematopoietic tissues. Highly expressed in erythroleukemia cell lines. Up-regulated in CD34+ hematopoietic progenitors cultured toward red blood cells.

It localises to the cell membrane. In terms of biological role, regulator of red blood cell formation. In Homo sapiens (Human), this protein is Small integral membrane protein 1.